The sequence spans 867 residues: Dynamin-1 (867 aa).

One can recognise a Dynamin-type G domain in the interval 28 to 294; it reads DLDLPQIAVV…LTNHIRDTLP (267 aa). The segment at 38–45 is G1 motif; sequence GGQSAGKS. The GDP site is built by S41, G43, K44, S45, S46, R59, and G60. The tract at residues 64 to 66 is G2 motif; the sequence is VTR. Y80 carries the phosphotyrosine modification. Y125 carries the 3'-nitrotyrosine; alternate modification. A Phosphotyrosine; alternate modification is found at Y125. Residues 136 to 139 form a G3 motif region; that stretch reads DLPG. The G4 motif stretch occupies residues 205 to 208; that stretch reads TKLD. K206, D208, D211, N236, R237, and Q239 together coordinate GDP. Residues 235–238 are G5 motif; the sequence is VNRS. S306 and S347 each carry phosphoserine. Residue Y354 is modified to Phosphotyrosine. Phosphoserine is present on S512. Residues 515 to 625 form the PH domain; it reads QDEILVIRKG…WKASFLRAGV (111 aa). Positions 659-750 constitute a GED domain; that stretch reads VETIRNLVDS…IIGDINTTTV (92 aa). A disordered region spans residues 767–867; it reads SVPAGRRSPT…HENRAGKARL (101 aa). 2 positions are modified to phosphoserine: S774 and S778. Position 796 is an omega-N-methylarginine (R796). S822 carries the phosphoserine modification. Over residues 825 to 843 the composition is skewed to pro residues; sequence PFGPPPQVPSRPNRAPPGV. Residues G847, L851, and K857 each carry the phosphoserine modification. The segment covering 856–867 has biased composition (basic and acidic residues); it reads GKHENRAGKARL.

The protein belongs to the TRAFAC class dynamin-like GTPase superfamily. Dynamin/Fzo/YdjA family. As to quaternary structure, homodimer; homodimerization is mediated by the dynamin-type G domain which promotes assembly-stimulated GTPase activity. Homo-tetramer formed from two dimers in the absence of lipid. Oligomerizes into a helical polymer that self-assembles around the vesicle membrane, when associated to the menbrane through lipid binding. Interacts (via C-terminal proline-rich domain (PRD)) with SNX9 (via SH3 domain); this interaction allows regulation of DNM1 self-assembly during late stages of endocytic vesicle formation and supports DNM1's early functions in accelerating clathrin-coated pits (CCPs) maturation in non neuronals cell. Interacts (via C-terminal proline-rich domain (PRD)) with MYO1E (via SH3 domain); this interaction regulates receptor-mediated endocytosis. Interacts with SNX33 (via SH3 domain); this interaction decreases DNM1-dependent endocytosis. Interacts with DIAPH1. Interacts with GRB2 (via SH3 domain); this interaction mediates disassembly of DNM1 polymers, therefore modulates self-assembly. Forms a complex with BIN1 (via SH3 domain) and SH3GL2 (via SH3 domain). Forms a complex with SH3GL2 (via SH3 domain) and AMPH (via SH3 domain). Forms a complex with SH3GL2 (via SH3 domain) and SYNJ1. Interacts (via C-terminal proline-rich domain (PRD)) with SYT1; this interaction facilitates vesicle fission during clathrin-mediated endocytosis (CME). Interacts (via C-terminal proline-rich domain (PRD)) with PLCG1 (via SH3 domain); this interaction stimulates the release of GDP from DNM1 and enhances DNM1-dependent endocytosis. Interacts with SNPH; this interaction inhibits the binding of DNM1 to AMPH and DNM1-receptor-mediated endocytosis. Interacts with CAV1. Interacts with SH3GLB1 (via SH3 domain). Interacts with PACSIN1 (via SH3 domain), PACSIN2 (via SH3 domain) and PACSIN3 (via SH3 domain). Interacts with UNC119; this interaction decreases DNM1's GTPase activity and affects DNM1's interaction with AMPH. Interacts with AMPH. Interacts (GTP-bound form) with DNAJC6; this interaction allows clathrin-coated vesicle (CCV) formation at the plasma membrane. In terms of processing, phosphorylation at Ser-774 by GSK3B/GSK3-beta leads to inactivation of receptor-mediated endocytosis in non-neuronal cells. Dephosphorylation at Ser-774, through the EGFR downstream signaling, leads to activation and regulates early stages of clathrin-mediated endocytosis (CME). Phosphorylated on Tyr in response to EGF stimulation in cells expressing truncated EGFR. Phosphorylated by CDK5 leading to synaptic vesicle endocytosis (SVE) activation. Expressed exclusively in the brain.

The protein resides in the cell membrane. Its subcellular location is the membrane. The protein localises to the clathrin-coated pit. It is found in the cytoplasmic vesicle. It localises to the presynapse. The protein resides in the secretory vesicle. Its subcellular location is the chromaffin granule. The catalysed reaction is GTP + H2O = GDP + phosphate + H(+). Functionally, catalyzes the hydrolysis of GTP and utilizes this energy to mediate vesicle scission and participates in many forms of endocytosis, such as clathrin-mediated endocytosis or synaptic vesicle endocytosis as well as rapid endocytosis (RE). Associates to the membrane, through lipid binding, and self-assembles into rings and stacks of interconnected rings through oligomerization to form a helical polymer around the vesicle membrane leading to constriction of invaginated coated pits around their necks. Self-assembly of the helical polymer induces membrane tubules narrowing until the polymer reaches a length sufficient to trigger GTP hydrolysis. Depending on the curvature imposed on the tubules, membrane detachment from the helical polymer upon GTP hydrolysis can cause spontaneous hemifission followed by complete fission. May play a role in regulating early stages of clathrin-mediated endocytosis in non-neuronal cells through its activation by dephosphorylation via the signaling downstream of EGFR. Controls vesicle size at a step before fission, during formation of membrane pits, at hippocampal synapses. Controls plastic adaptation of the synaptic vesicle recycling machinery to high levels of activity. Mediates rapid endocytosis (RE), a Ca(2+)-dependent and clathrin- and K(+)-independent process in chromaffin cells. Microtubule-associated force-producing protein involved in producing microtubule bundles and able to bind and hydrolyze GTP. Through its interaction with DNAJC6, acts during the early steps of clathrin-coated vesicle (CCV) formation. The chain is Dynamin-1 from Mus musculus (Mouse).